Here is a 349-residue protein sequence, read N- to C-terminus: MAIPITVLDCDLLLYGRGHRTLDRFKLDDVTDEYLMSMYGFPRQFIYFLVELLGASLSRPTQRSRAISPETQILAALGFYTSGSFQTRMGDAIGISQASMSRCVANVTEALVERASQFIHFPVDEAAVQSLKDEFYGLAGMPGVIGVADCIHVAIKAPNAEDLSYVNRKGLHSLNCLVVCDIRGALMTVETSWPGSLQDCAVLQRSSLTSQFETGMPKDSWLLGDSSFFLRSWLLTPLPIPETAAEYRYNRAHSATHSVIERTLQTLCCRFRCLDGSKGALQYSPEKCSHIILACCVLHNISLDHGMDVWSSPVPGPIDQPPEGEDEHMESLDLEADRIRQELILTHFS.

4 residues coordinate a divalent metal cation: Asp-149, Asp-199, Asp-225, and Glu-261. The DDE Tnp4 domain maps to 149-300 (DCIHVAIKAP…IILACCVLHN (152 aa)).

Belongs to the HARBI1 family. As to quaternary structure, interacts with NAIF1. A divalent metal cation is required as a cofactor. Detected in adult brain, eye, nerve tissue and lung. Detected in embryo.

It is found in the nucleus. The protein localises to the cytoplasm. Its function is as follows. Transposase-derived protein that may have nuclease activity (Potential). Does not have transposase activity. The sequence is that of Putative nuclease HARBI1 (Harbi1) from Mus musculus (Mouse).